We begin with the raw amino-acid sequence, 322 residues long: uncharacterized protein (322 aa).

Polar residues predominate over residues 1 to 13 (MTNADEQNMGQQE). Disordered regions lie at residues 1 to 94 (MTNA…EEYE) and 125 to 322 (RREM…TDEE). The span at 14 to 31 (GTDTATTAQDTNTQTVGT) shows a compositional bias: low complexity. Over residues 32-50 (QSENTQNTQQASDAQTEQT) the composition is skewed to polar residues. Positions 64-75 (EVDEDDVLDAQE) are enriched in acidic residues. Basic and acidic residues-rich tracts occupy residues 141 to 227 (GGDR…RGGD), 235 to 269 (RPREDRGGFGDRDRGGFRPREDRGERNFGGDRGGD), 277 to 295 (RPREDRNFGDREFRPRTDD), and 308 to 322 (ARADRGWANRRTDEE).

This is an uncharacterized protein from Deinococcus radiodurans (strain ATCC 13939 / DSM 20539 / JCM 16871 / CCUG 27074 / LMG 4051 / NBRC 15346 / NCIMB 9279 / VKM B-1422 / R1).